A 197-amino-acid chain; its full sequence is MSTLVPYVIEQTGNGERSYDIFSRLLKDRIIFVDGEINDMSADLVVAQLLFLEAQNPDKDISLYINSPGGSVTAGLAIYDTMQHIRPDVQTICLGQCASMGAVLLAGGAKNKRYALPSSRVMIHQPWGGVQGQAVDINIQAKEIVRLKKLTIKYFAENTGKTEKQVAADMERDFFMSAEEALTYGIIDTVMNRRKDG.

The active-site Nucleophile is the Ser-99. The active site involves His-124.

It belongs to the peptidase S14 family. As to quaternary structure, fourteen ClpP subunits assemble into 2 heptameric rings which stack back to back to give a disk-like structure with a central cavity, resembling the structure of eukaryotic proteasomes.

The protein localises to the cytoplasm. The enzyme catalyses Hydrolysis of proteins to small peptides in the presence of ATP and magnesium. alpha-casein is the usual test substrate. In the absence of ATP, only oligopeptides shorter than five residues are hydrolyzed (such as succinyl-Leu-Tyr-|-NHMec, and Leu-Tyr-Leu-|-Tyr-Trp, in which cleavage of the -Tyr-|-Leu- and -Tyr-|-Trp bonds also occurs).. Functionally, cleaves peptides in various proteins in a process that requires ATP hydrolysis. Has a chymotrypsin-like activity. Plays a major role in the degradation of misfolded proteins. This Treponema denticola (strain ATCC 35405 / DSM 14222 / CIP 103919 / JCM 8153 / KCTC 15104) protein is ATP-dependent Clp protease proteolytic subunit 1.